Reading from the N-terminus, the 224-residue chain is Myogenin (224 aa).

Phosphoserine; by CaMK2G is present on residues Ser77 and Ser79. The 52-residue stretch at 81-132 folds into the bHLH domain; sequence DRRRAATLREKRRLKKVNEAFEALKRSTLLNPNQRLPKVEILRSAIQYIERL. Thr87 carries the post-translational modification Phosphothreonine; by CaMK2G.

In terms of assembly, homodimer and heterodimer with E12; heterodimerization enhances MYOG DNA-binding and transcriptional activities. Interacts with SMARCA4/BRG1/BAF190A. Interacts (via C-terminal region) with SSRP1 and SUPT16H; the interaction is indicative of an interaction with the FACT complex. Interacts with CSRP3. In terms of processing, phosphorylated by CAMK2G on threonine and serine amino acids in a muscle activity-dependent manner. Phosphorylation of Thr-87 impairs both DNA-binding and trans-activation functions in contracting muscles.

It is found in the nucleus. Its function is as follows. Acts as a transcriptional activator that promotes transcription of muscle-specific target genes and plays a role in muscle differentiation, cell cycle exit and muscle atrophy. Essential for the development of functional embryonic skeletal fiber muscle differentiation. However is dispensable for postnatal skeletal muscle growth; phosphorylation by CAMK2G inhibits its transcriptional activity in respons to muscle activity. Required for the recruitment of the FACT complex to muscle-specific promoter regions, thus promoting gene expression initiation. During terminal myoblast differentiation, plays a role as a strong activator of transcription at loci with an open chromatin structure previously initiated by MYOD1. Together with MYF5 and MYOD1, co-occupies muscle-specific gene promoter core regions during myogenesis. Also cooperates with myocyte-specific enhancer factor MEF2D and BRG1-dependent recruitment of SWI/SNF chromatin-remodeling enzymes to alter chromatin structure at myogenic late gene promoters. Facilitates cell cycle exit during terminal muscle differentiation through the up-regulation of miR-20a expression, which in turn represses genes involved in cell cycle progression. Binds to the E-box containing (E1) promoter region of the miR-20a gene. Also plays a role in preventing reversal of muscle cell differentiation. Contributes to the atrophy-related gene expression in adult denervated muscles. Induces fibroblasts to differentiate into myoblasts. The protein is Myogenin (MYOG) of Bos taurus (Bovine).